The following is a 196-amino-acid chain: Large ribosomal subunit protein uL5 (196 aa).

It belongs to the universal ribosomal protein uL5 family. In terms of assembly, part of the 50S ribosomal subunit; part of the 5S rRNA/L5/L18/L25 subcomplex. Contacts the 5S rRNA and the P site tRNA. Forms a bridge to the 30S subunit in the 70S ribosome.

Its function is as follows. This is one of the proteins that bind and probably mediate the attachment of the 5S RNA into the large ribosomal subunit, where it forms part of the central protuberance. In the 70S ribosome it contacts protein S13 of the 30S subunit (bridge B1b), connecting the 2 subunits; this bridge is implicated in subunit movement. Contacts the P site tRNA; the 5S rRNA and some of its associated proteins might help stabilize positioning of ribosome-bound tRNAs. The sequence is that of Large ribosomal subunit protein uL5 from Rhodopirellula baltica (strain DSM 10527 / NCIMB 13988 / SH1).